Consider the following 259-residue polypeptide: Ribonuclease HII (259 aa).

Residues 70–258 form the RNase H type-2 domain; that stretch reads TLIAGIDEVG…VKSLVLGKKE (189 aa). Residues Asp76, Glu77, and Asp168 each contribute to the a divalent metal cation site.

This sequence belongs to the RNase HII family. Requires Mn(2+) as cofactor. The cofactor is Mg(2+).

It is found in the cytoplasm. It catalyses the reaction Endonucleolytic cleavage to 5'-phosphomonoester.. Its function is as follows. Endonuclease that specifically degrades the RNA of RNA-DNA hybrids. The sequence is that of Ribonuclease HII from Streptococcus pneumoniae serotype 19F (strain G54).